The chain runs to 198 residues: N-acetyltransferase 9-like protein (198 aa).

An N-acetyltransferase domain is found at 14 to 186 (IILVPYKEKH…SNNFTNLTAD (173 aa)).

This sequence belongs to the acetyltransferase family. GNAT subfamily.

The protein is N-acetyltransferase 9-like protein (nat9) of Nematostella vectensis (Starlet sea anemone).